The sequence spans 151 residues: MD-2-related lipid-recognition protein (151 aa).

The first 18 residues, 1 to 18 (MAALHWLLLAALLGCTLA), serve as a signal peptide directing secretion. 3 disulfides stabilise this stretch: Cys27/Cys141, Cys45/Cys51, and Cys95/Cys100. N-linked (GlcNAc...) asparagine glycosylation occurs at Asn58.

In terms of processing, N-glycosylated. As to expression, hemolymph (at protein level). Constitutively expressed mainly in fat body and also in hemocytes and secreted into hemolymph. Not detected in midgut, epidermis, or Malpighian tubule of naive larvae.

The protein resides in the secreted. Functionally, binds to lipopolysaccharide from a variety of Gram-negative bacteria and to lipid A. This is MD-2-related lipid-recognition protein from Manduca sexta (Tobacco hawkmoth).